Here is a 188-residue protein sequence, read N- to C-terminus: Elongation factor P (188 aa).

Residue K34 is modified to N6-(3,6-diaminohexanoyl)-5-hydroxylysine.

Belongs to the elongation factor P family. In terms of processing, may be beta-lysylated on the epsilon-amino group of Lys-34 by the combined action of EpmA and EpmB, and then hydroxylated on the C5 position of the same residue by EpmC (if this protein is present). Lysylation is critical for the stimulatory effect of EF-P on peptide-bond formation. The lysylation moiety may extend toward the peptidyltransferase center and stabilize the terminal 3-CCA end of the tRNA. Hydroxylation of the C5 position on Lys-34 may allow additional potential stabilizing hydrogen-bond interactions with the P-tRNA.

It is found in the cytoplasm. The protein operates within protein biosynthesis; polypeptide chain elongation. Involved in peptide bond synthesis. Alleviates ribosome stalling that occurs when 3 or more consecutive Pro residues or the sequence PPG is present in a protein, possibly by augmenting the peptidyl transferase activity of the ribosome. Modification of Lys-34 is required for alleviation. The polypeptide is Elongation factor P (Vibrio parahaemolyticus serotype O3:K6 (strain RIMD 2210633)).